The chain runs to 479 residues: Cyclin-dependent kinase F-1 (479 aa).

One can recognise a Protein kinase domain in the interval 24–419 (YEVLGRAGSG…AADLLNDPYF (396 aa)). Residues 30-38 (AGSGAYADV) and K53 contribute to the ATP site. D146 serves as the catalytic Proton acceptor. Residue T291 is modified to Phosphothreonine. The segment at 429 to 479 (EGLQVPESKDEDDDSTEEWANFRGGDSDSDFDEFGSMDVTKTDKGFSIRFS) is disordered. Residues 468–479 (TKTDKGFSIRFS) show a composition bias toward basic and acidic residues.

Belongs to the protein kinase superfamily. CMGC Ser/Thr protein kinase family. CDC2/CDKX subfamily.

The catalysed reaction is L-seryl-[protein] + ATP = O-phospho-L-seryl-[protein] + ADP + H(+). The enzyme catalyses L-threonyl-[protein] + ATP = O-phospho-L-threonyl-[protein] + ADP + H(+). It catalyses the reaction [DNA-directed RNA polymerase] + ATP = phospho-[DNA-directed RNA polymerase] + ADP + H(+). The protein is Cyclin-dependent kinase F-1 (CDKF-1) of Oryza sativa subsp. japonica (Rice).